Consider the following 185-residue polypeptide: uncharacterized protein (185 aa).

Positions 1–24 (MPCNRAVFGAFVLALLISLQSVYF) are cleaved as a signal peptide. The chain crosses the membrane as a helical span at residues 50–70 (VAVNVIVEFSFDILFFLCGLL). Over residues 96-113 (ELEHVSSRRRNDSRDDST) the composition is skewed to basic and acidic residues. A disordered region spans residues 96–185 (ELEHVSSRRR…LFTAGGIGLP (90 aa)). Polar residues predominate over residues 114–126 (VRNVSKTSPLASQ). Over residues 127–138 (RSRDHFDGDPRE) the composition is skewed to basic and acidic residues. Residues 139-155 (PAPPAYSPADFYPPPAS) show a composition bias toward pro residues.

It localises to the host membrane. This is an uncharacterized protein from Colorado tick fever virus (strain USA/Florio N-7180) (CTFV).